The following is a 554-amino-acid chain: RecBCD enzyme subunit RecD (554 aa).

Position 155 to 162 (155 to 162 (GGPGTGKT)) interacts with ATP.

It belongs to the RecD family. In terms of assembly, heterotrimer of RecB, RecC and RecD. All subunits contribute to DNA-binding.

The catalysed reaction is Couples ATP hydrolysis with the unwinding of duplex DNA at the replication fork by translocating in the 5'-3' direction. This creates two antiparallel DNA single strands (ssDNA). The leading ssDNA polymer is the template for DNA polymerase III holoenzyme which synthesizes a continuous strand.. It catalyses the reaction ATP + H2O = ADP + phosphate + H(+). Functionally, a helicase/nuclease that prepares dsDNA breaks (DSB) for recombinational DNA repair. Binds to DSBs and unwinds DNA via a highly rapid and processive ATP-dependent bidirectional helicase activity. Holoenzyme degrades any linearized DNA that is unable to undergo homologous recombination. In the holoenzyme this subunit has ssDNA-dependent ATPase and 5'-3' helicase activity. When added to pre-assembled RecBC greatly stimulates nuclease activity and augments holoenzyme processivity. Unlike the case in E.coli, suppresses RecA-dependent homologous recombination, is instead required for single-strand annealing pathway repair of DSB. The chain is RecBCD enzyme subunit RecD from Mycolicibacterium smegmatis (strain ATCC 700084 / mc(2)155) (Mycobacterium smegmatis).